A 502-amino-acid polypeptide reads, in one-letter code: 4,4'-diaponeurosporene oxygenase (502 aa).

8-20 (IIGGGLGGISAAI) provides a ligand contact to FAD.

Belongs to the carotenoid/retinoid oxidoreductase family. CrtP subfamily. The cofactor is FAD.

The enzyme catalyses all-trans-4,4'-diaponeurosporene + 2 AH2 + 2 O2 = 4,4'-diaponeurosporenal + 2 A + 3 H2O. The protein operates within carotenoid biosynthesis; staphyloxanthin biosynthesis; staphyloxanthin from farnesyl diphosphate: step 3/5. Its function is as follows. Involved in the biosynthesis of the yellow-orange carotenoid staphyloxanthin, which plays a role in the virulence via its protective function against oxidative stress. Catalyzes the oxidation of the terminal methyl side group of 4,4'-diaponeurosporene to form 4,4'-diaponeurosporen-4-al. The protein is 4,4'-diaponeurosporene oxygenase of Staphylococcus haemolyticus (strain JCSC1435).